The sequence spans 590 residues: MKTVRFNKQALAILAACFIFLLCVVCYFSASSESHNAVVVGERARGHIAVRDVENRHLAEEKHAVIHAKTVGKIERVVSQEKVEILRPARVESKPPGEKTSTEPEETGVGKAPIQTSEGLEKLIGKIHYENKDEENDLRRQKVKEMMIHAWEGYKNYSWGANELRPMSKKPNSQNIFGGSQMPATIVDAADTLFIMDLKDKYKEARDYIENNFSMAKSTSTLSVFETTIRFLGGLLSLYALTQESFYIEKAREVGEALLPAFNTPSGIPKSNLDVASKHASNYGWANGGQSILSEIGSLHLEFLYLSRISNAPIFEKKVKKVRDALEKAEKPNGLYSNYINPDTGKFTGSHMSLGALGDSFYEYLIKSYVQSNYTDTQAKNMYWDVSDAIQKHMIKVSKQSNLTYTVELNNGQAQHKMGHLACFVPGMFALQAINEDTEEEKLRIMTLAEELAKTCHESYIRSETHIGPEMFYFNERDEATSKHSENGYIQRPEVIEGWFYLWRLTGKTMYRDWVWDAVQAIEKYCRVDSGFTGLQNVYNPKAGREDVMQSFFLAEFLKYAYLTFADESLISLDKWVFNTEAHPVPVLTN.

Residues 1–9 (MKTVRFNKQ) are Cytoplasmic-facing. Residues 10-30 (ALAILAACFIFLLCVVCYFSA) form a helical; Signal-anchor for type II membrane protein membrane-spanning segment. The Lumenal segment spans residues 31 to 590 (SSESHNAVVV…EAHPVPVLTN (560 aa)). The segment covering 88–102 (PARVESKPPGEKTST) has biased composition (basic and acidic residues). Residues 88–112 (PARVESKPPGEKTSTEPEETGVGKA) are disordered. N-linked (GlcNAc...) asparagine glycans are attached at residues Asn-156, Asn-212, Asn-373, and Asn-402. A disulfide bridge connects residues Cys-423 and Cys-456. Glu-470 acts as the Proton donor in catalysis. Thr-580 contacts Ca(2+).

The protein belongs to the glycosyl hydrolase 47 family. Requires Ca(2+) as cofactor.

Its subcellular location is the membrane. The catalysed reaction is N(4)-(alpha-D-Man-(1-&gt;2)-alpha-D-Man-(1-&gt;2)-alpha-D-Man-(1-&gt;3)-[alpha-D-Man-(1-&gt;2)-alpha-D-Man-(1-&gt;3)-[alpha-D-Man-(1-&gt;2)-alpha-D-Man-(1-&gt;6)]-alpha-D-Man-(1-&gt;6)]-beta-D-Man-(1-&gt;4)-beta-D-GlcNAc-(1-&gt;4)-beta-D-GlcNAc)-L-asparaginyl-[protein] (N-glucan mannose isomer 9A1,2,3B1,2,3) + 4 H2O = N(4)-(alpha-D-Man-(1-&gt;3)-[alpha-D-Man-(1-&gt;3)-[alpha-D-Man-(1-&gt;6)]-alpha-D-Man-(1-&gt;6)]-beta-D-Man-(1-&gt;4)-beta-D-GlcNAc-(1-&gt;4)-beta-D-GlcNAc)-L-asparaginyl-[protein] (N-glucan mannose isomer 5A1,2) + 4 beta-D-mannose. The enzyme catalyses N(4)-(alpha-D-Man-(1-&gt;2)-alpha-D-Man-(1-&gt;2)-alpha-D-Man-(1-&gt;3)-[alpha-D-Man-(1-&gt;3)-[alpha-D-Man-(1-&gt;2)-alpha-D-Man-(1-&gt;6)]-alpha-D-Man-(1-&gt;6)]-beta-D-Man-(1-&gt;4)-beta-D-GlcNAc-(1-&gt;4)-beta-D-GlcNAc)-L-asparaginyl-[protein] (N-glucan mannose isomer 8A1,2,3B1,3) + 3 H2O = N(4)-(alpha-D-Man-(1-&gt;3)-[alpha-D-Man-(1-&gt;3)-[alpha-D-Man-(1-&gt;6)]-alpha-D-Man-(1-&gt;6)]-beta-D-Man-(1-&gt;4)-beta-D-GlcNAc-(1-&gt;4)-beta-D-GlcNAc)-L-asparaginyl-[protein] (N-glucan mannose isomer 5A1,2) + 3 beta-D-mannose. It participates in protein modification; protein glycosylation. Functionally, involved in the maturation of Asn-linked oligosaccharides. Progressively trim alpha-1,2-linked mannose residues from Man(9)GlcNAc(2) to produce Man(5)GlcNAc(2). The protein is Mannosyl-oligosaccharide 1,2-alpha-mannosidase mans-2 of Caenorhabditis elegans.